Reading from the N-terminus, the 581-residue chain is Arginine--tRNA ligase (581 aa).

Positions 122–132 (PNVAKPMHVGH) match the 'HIGH' region motif.

Belongs to the class-I aminoacyl-tRNA synthetase family. Monomer.

The protein localises to the cytoplasm. It catalyses the reaction tRNA(Arg) + L-arginine + ATP = L-arginyl-tRNA(Arg) + AMP + diphosphate. This Francisella tularensis subsp. novicida (strain U112) protein is Arginine--tRNA ligase.